Here is a 355-residue protein sequence, read N- to C-terminus: Uroporphyrinogen decarboxylase (355 aa).

Substrate-binding positions include arginine 27–arginine 31, aspartate 77, tyrosine 154, threonine 209, and histidine 328.

It belongs to the uroporphyrinogen decarboxylase family. Homodimer.

Its subcellular location is the cytoplasm. It catalyses the reaction uroporphyrinogen III + 4 H(+) = coproporphyrinogen III + 4 CO2. It functions in the pathway porphyrin-containing compound metabolism; protoporphyrin-IX biosynthesis; coproporphyrinogen-III from 5-aminolevulinate: step 4/4. Functionally, catalyzes the decarboxylation of four acetate groups of uroporphyrinogen-III to yield coproporphyrinogen-III. The sequence is that of Uroporphyrinogen decarboxylase from Aliivibrio salmonicida (strain LFI1238) (Vibrio salmonicida (strain LFI1238)).